Reading from the N-terminus, the 564-residue chain is Phenylalanine--tRNA ligase beta subunit (564 aa).

The B5 domain maps to 286–362 (YFQNSLKINV…IGKGLDNFKS (77 aa)). Mg(2+)-binding residues include Asp340, Asp346, Glu349, and Glu350.

The protein belongs to the phenylalanyl-tRNA synthetase beta subunit family. Type 2 subfamily. As to quaternary structure, tetramer of two alpha and two beta subunits. It depends on Mg(2+) as a cofactor.

Its subcellular location is the cytoplasm. It catalyses the reaction tRNA(Phe) + L-phenylalanine + ATP = L-phenylalanyl-tRNA(Phe) + AMP + diphosphate + H(+). This chain is Phenylalanine--tRNA ligase beta subunit, found in Borrelia duttonii (strain Ly).